Consider the following 1293-residue polypeptide: Cilia- and flagella-associated protein 57 A (1293 aa).

The stretch at 72–113 (PGTKGITCMTLSPSKRLLAWSEDCDSGIIVVFDLIKLDKLEK) is one WD 1 repeat. The interval 117–143 (QNYQEPSDKDKLDKQAEKDRRDRFEKE) is disordered. A compositionally biased stretch (basic and acidic residues) spans 122–143 (PSDKDKLDKQAEKDRRDRFEKE). WD repeat units follow at residues 309–348 (PKNE…KNPY), 359–398 (DMKA…MQLN), 411–450 (FHSD…LENS), 535–574 (RGSG…PQKT), and 700–739 (SHFG…YQVK). Coiled coils occupy residues 756-1016 (RDQY…REKT), 1045-1079 (IKEL…FKRT), and 1209-1285 (INHL…QIQN).

Belongs to the CFAP57 family. In terms of assembly, forms a heterodimer with CFAP57C. Associates with components of the nexin-dynein regulatory complex (N-DRC) and the CFAP184:CFAP263 complex.

The protein localises to the cell projection. The protein resides in the cilium. Its function is as follows. Associates with components of the nexin-dynein regulatory complex (N-DRC), a key regulator of ciliary/flagellar motility, and might act as an inner dynein arm (IDA) hub or linkage. The protein is Cilia- and flagella-associated protein 57 A (CFAP57A) of Tetrahymena thermophila (strain SB210).